The primary structure comprises 221 residues: GTP-binding nuclear protein Ran-B1 (221 aa).

The Small GTPase Ran-type domain occupies 10–174 (DYPSFKLVIV…LYLARKLAGD (165 aa)). 21–28 (DGGTGKTT) contributes to the GTP binding site. The interval 40–48 (KKYEPTIGV) is switch-I. GTP-binding positions include Gly-71, 125 to 128 (NKVD), and 153 to 155 (SAK). Positions 71-87 (GQEKFGGLRDGYYIHGQ) are switch-II.

Belongs to the small GTPase superfamily. Ran family. As to quaternary structure, found in a nuclear export complex with RanGTP, exportin and pre-miRNA.

It is found in the nucleus. Its function is as follows. GTP-binding protein involved in nucleocytoplasmic transport. Required for the import of protein into the nucleus and also for RNA export. Involved in chromatin condensation and control of cell cycle. The protein is GTP-binding nuclear protein Ran-B1 (RAN-B1) of Nicotiana tabacum (Common tobacco).